Reading from the N-terminus, the 877-residue chain is Clumping factor B (877 aa).

A signal peptide spans 1-44 (MKKRIDYLSNKQNKYSIRRFTVGTTSVIVGATILFGIGNHQAQA). The short motif at 15-26 (YSIRRFTVGTTS) is the YSIRK-G/S signaling motif element. Composition is skewed to polar residues over residues 44–61 (ASEQ…NASA) and 68–95 (MIET…NVDS). Positions 44–192 (ASEQSNDTTQ…QGTSKPSVRT (149 aa)) are disordered. Residues 45-542 (SEQSNDTTQS…GSADGDSAVN (498 aa)) are ligand binding A region. Low complexity predominate over residues 96–119 (TTKPMSTQTSNTTTTEPASTNETP). Over residues 120 to 189 (QPTAIKNQAT…SNAQGTSKPS (70 aa)) the composition is skewed to polar residues. The short motif at 272–276 (DYSNS) is the MIDAS-like motif element. The disordered stretch occupies residues 530–849 (YGGGSADGDS…ETGDKSENTN (320 aa)). Positions 545–555 (DPTPGPPVDPE) are enriched in pro residues. Over residues 556–801 (PSPDPEPEPT…SDSDSDSDSD (246 aa)) the composition is skewed to acidic residues. Over residues 805–816 (RVTPPNNEQKAP) the composition is skewed to polar residues. Positions 833-846 (HKTDALPETGDKSE) are enriched in basic and acidic residues. Positions 838-842 (LPETG) match the LPXTG sorting signal motif. T841 carries the pentaglycyl murein peptidoglycan amidated threonine modification. The propeptide at 842–877 (GDKSENTNATLFGAMMALLGSLLLFRKRKQDHKEKA) is removed by sortase.

This sequence belongs to the serine-aspartate repeat-containing protein (SDr) family. Proteolytically cleaved by aureolysin (aur). This cleavage leads to the inactivation of ClfB.

The protein resides in the secreted. The protein localises to the cell wall. Functionally, cell surface-associated protein implicated in virulence by promoting bacterial attachment to both alpha- and beta-chains of human fibrinogen and inducing the formation of bacterial clumps. Partly responsible for mediating bacterial attachment to the highly keratinized squamous epithelial cells from the nasal cavity via an interaction with cytokeratin K10 (K10). Also promotes bacterial attachment to cultured keratinocytes, possibly through an interaction with cytokeratin K10. Binds mouse cytokeratin K10. Activates human platelet aggregation. In Staphylococcus aureus (strain NCTC 8325 / PS 47), this protein is Clumping factor B (clfB).